Consider the following 149-residue polypeptide: Ribosome maturation factor RimP (149 aa).

The protein belongs to the RimP family.

It localises to the cytoplasm. Required for maturation of 30S ribosomal subunits. This chain is Ribosome maturation factor RimP, found in Sulfurimonas denitrificans (strain ATCC 33889 / DSM 1251) (Thiomicrospira denitrificans (strain ATCC 33889 / DSM 1251)).